Reading from the N-terminus, the 182-residue chain is Ferredoxin-thioredoxin reductase subunit A1, chloroplastic (182 aa).

A chloroplast-targeting transit peptide spans 1–81; it reads MSSQIALSPA…VAIKSADSIN (81 aa).

This sequence belongs to the ferredoxin thioredoxin reductase alpha subunit family. As to quaternary structure, heterodimer of subunit A (variable subunit) and subunit B (catalytic subunit). Heterodimeric FTR forms a complex with ferredoxin and thioredoxin.

Its subcellular location is the plastid. It is found in the chloroplast. Functionally, variable subunit of the ferredoxin-thioredoxin reductase (FTR), which catalyzes the two-electron reduction of thioredoxins by the electrons provided by reduced ferredoxin. This Arabidopsis thaliana (Mouse-ear cress) protein is Ferredoxin-thioredoxin reductase subunit A1, chloroplastic.